A 435-amino-acid chain; its full sequence is Adenylosuccinate synthetase (435 aa).

GTP is bound by residues 11-17 (GDEGKGK) and 39-41 (GHT). Residue D12 is the Proton acceptor of the active site. Residues D12 and G39 each contribute to the Mg(2+) site. IMP-binding positions include 12 to 15 (DEGK), 37 to 40 (NAGH), T134, R148, N230, T245, and R309. H40 functions as the Proton donor in the catalytic mechanism. Substrate is bound at residue 305 to 311 (VTTGRKR). GTP contacts are provided by residues R311, 337 to 339 (KLD), and 419 to 421 (GTG).

Belongs to the adenylosuccinate synthetase family. As to quaternary structure, homodimer. It depends on Mg(2+) as a cofactor.

It localises to the cytoplasm. It catalyses the reaction IMP + L-aspartate + GTP = N(6)-(1,2-dicarboxyethyl)-AMP + GDP + phosphate + 2 H(+). The protein operates within purine metabolism; AMP biosynthesis via de novo pathway; AMP from IMP: step 1/2. Its function is as follows. Plays an important role in the de novo pathway and in the salvage pathway of purine nucleotide biosynthesis. Catalyzes the first committed step in the biosynthesis of AMP from IMP. The sequence is that of Adenylosuccinate synthetase from Zygosaccharomyces rouxii (strain ATCC 2623 / CBS 732 / NBRC 1130 / NCYC 568 / NRRL Y-229).